We begin with the raw amino-acid sequence, 148 residues long: Small ribosomal subunit protein eS19 (148 aa).

Belongs to the eukaryotic ribosomal protein eS19 family.

The protein is Small ribosomal subunit protein eS19 (rps19) of Dictyostelium discoideum (Social amoeba).